The chain runs to 122 residues: MLKKVSKNTNRQGRHQRVRNKITGTSQRPRLNVYRSLNHIYAQVIDDVAGITLVAASTLDEAIKSQVEASGNQDAAKLVGELVGKRALEKGVSTVTFDRGGYIYHGRVKALADGAREAGLKF.

The segment covering 1 to 20 (MLKKVSKNTNRQGRHQRVRN) has biased composition (basic residues). The interval 1–22 (MLKKVSKNTNRQGRHQRVRNKI) is disordered.

This sequence belongs to the universal ribosomal protein uL18 family. In terms of assembly, part of the 50S ribosomal subunit; part of the 5S rRNA/L5/L18/L25 subcomplex. Contacts the 5S and 23S rRNAs.

This is one of the proteins that bind and probably mediate the attachment of the 5S RNA into the large ribosomal subunit, where it forms part of the central protuberance. This is Large ribosomal subunit protein uL18 from Alkaliphilus metalliredigens (strain QYMF).